A 42-amino-acid chain; its full sequence is Alpha-conotoxin VnIB (42 aa).

The propeptide occupies 1–22 (ASDGRNAAADDKASDPIALTVR). 2 cysteine pairs are disulfide-bonded: cysteine 25-cysteine 31 and cysteine 26-cysteine 38. Glycine 39 carries the glycine amide modification.

It belongs to the conotoxin A superfamily. In terms of tissue distribution, expressed by the venom duct.

Its subcellular location is the secreted. In terms of biological role, alpha-conotoxins act on postsynaptic membranes, they bind to the nicotinic acetylcholine receptors (nAChR) and thus inhibit them. This toxin potently and selectively inhibits human and rat alpha-6-beta-4/CHRNA6-CHRNB4 nAChR (IC(50)=12 nM on rat nAChR). It exhibits rapid binding and unbinding at this receptor. It also shows activity on rat alpha-6-beta-4/CHRNA6-CHRNB4 (IC(50)=12 nM), human alpha-6/alpha-3-beta-4 (CHRNA6/CHRNA3-CHRNB4) (IC(50)=5.3 nM), rat alpha-6/alpha-3-beta-4 (CHRNA6/CHRNA3-CHRNB4) (IC(50)=18 nM), rat alpha-3-beta-4/CHRNA3-CHRNB4 (IC(50)=320 nM), and rat alpha-6/alpha-3-beta-2-beta-3 (CHRNA6/CHRNA3-CHRNB2-CHRNB3) (IC(50)=4 uM). This is Alpha-conotoxin VnIB from Conus ventricosus (Mediterranean cone).